Reading from the N-terminus, the 388-residue chain is MSEHIVTPEDASAAPAIKSEKINLLDLNRQAMREFFKTLGEKPFRADQVMKWMYHYCCDDFDEMTDINKVLRGKLKEVAEIRAPEVVEEQRSSDGTIKWAIAVGDQRVETVYIPEDDRATLCVSSQVGCALECKFCSTAQQGFNRNLRVSEIIGQVWRAAKIIGAAKVTGQRPITNVVMMGMGEPLLNLTNVVPAMEIMLDDFGFGLSKRRVTLSTSGVVPALDKLGDMIDVALAISLHAPNDEIRDEIVPINKKYNIETFLAAVRRYIGKSNANQGRVTIEYVMLDHVNDGTEHAHQLAELLKDTPCKINLIPWNPFPGAPYGRSSNSRIDRFSKVLMSYGFTTIVRKTRGDDIDAACGQLAGDVIDRTKRTMRKRMQGEPIAVKAV.

Glutamate 109 acts as the Proton acceptor in catalysis. In terms of domain architecture, Radical SAM core spans 115-354 (EDDRATLCVS…TIVRKTRGDD (240 aa)). A disulfide bridge connects residues cysteine 122 and cysteine 359. Positions 129, 133, and 136 each coordinate [4Fe-4S] cluster. S-adenosyl-L-methionine contacts are provided by residues 183 to 184 (GE), serine 215, 237 to 239 (SLH), and asparagine 316. The active-site S-methylcysteine intermediate is cysteine 359.

The protein belongs to the radical SAM superfamily. RlmN family. [4Fe-4S] cluster serves as cofactor.

It is found in the cytoplasm. The enzyme catalyses adenosine(2503) in 23S rRNA + 2 reduced [2Fe-2S]-[ferredoxin] + 2 S-adenosyl-L-methionine = 2-methyladenosine(2503) in 23S rRNA + 5'-deoxyadenosine + L-methionine + 2 oxidized [2Fe-2S]-[ferredoxin] + S-adenosyl-L-homocysteine. It catalyses the reaction adenosine(37) in tRNA + 2 reduced [2Fe-2S]-[ferredoxin] + 2 S-adenosyl-L-methionine = 2-methyladenosine(37) in tRNA + 5'-deoxyadenosine + L-methionine + 2 oxidized [2Fe-2S]-[ferredoxin] + S-adenosyl-L-homocysteine. Specifically methylates position 2 of adenine 2503 in 23S rRNA and position 2 of adenine 37 in tRNAs. m2A2503 modification seems to play a crucial role in the proofreading step occurring at the peptidyl transferase center and thus would serve to optimize ribosomal fidelity. This chain is Dual-specificity RNA methyltransferase RlmN, found in Cronobacter sakazakii (strain ATCC BAA-894) (Enterobacter sakazakii).